Consider the following 331-residue polypeptide: D-alanine--D-alanine ligase (331 aa).

An ATP-grasp domain is found at 122–328; the sequence is KLWYDAIGIP…FHEFLADCIE (207 aa). 152–207 is a binding site for ATP; that stretch reads AFDKWGKLFVKAARQGSSVGCYSVTNIEQLSDAIDKAFGFSHQVLVEKAVKPRELE. Residues Asp282, Glu295, and Asn297 each contribute to the Mg(2+) site.

The protein belongs to the D-alanine--D-alanine ligase family. Mg(2+) is required as a cofactor. It depends on Mn(2+) as a cofactor.

The protein resides in the cytoplasm. It catalyses the reaction 2 D-alanine + ATP = D-alanyl-D-alanine + ADP + phosphate + H(+). Its pathway is cell wall biogenesis; peptidoglycan biosynthesis. In terms of biological role, cell wall formation. In Vibrio vulnificus (strain YJ016), this protein is D-alanine--D-alanine ligase.